We begin with the raw amino-acid sequence, 428 residues long: Cyclin-B1-1 (428 aa).

This sequence belongs to the cyclin family. Cyclin AB subfamily. As to quaternary structure, interacts with FZR2/CCS52A1, FZR1/CCS52A2 and FZR3/CCS52B. Expressed in root tip, lateral root apex, shoot apex, leaf primordia, axillary buds, stamen and petal primordia, ovules and developing embryo.

The protein resides in the nucleus. The protein is Cyclin-B1-1 (CYCB1-1) of Arabidopsis thaliana (Mouse-ear cress).